A 130-amino-acid chain; its full sequence is Small ribosomal subunit protein uS9 (130 aa).

The protein belongs to the universal ribosomal protein uS9 family.

The protein is Small ribosomal subunit protein uS9 of Bordetella bronchiseptica (strain ATCC BAA-588 / NCTC 13252 / RB50) (Alcaligenes bronchisepticus).